The sequence spans 322 residues: Germ cell-specific gene 1-like protein (322 aa).

The Cytoplasmic portion of the chain corresponds to 1 to 8 (MKTSRRGR). Residues 9 to 29 (ALLAVALNLLALLFATTAFLT) traverse the membrane as a helical segment. The Extracellular segment spans residues 30–122 (TYWCQGTQRV…FIDLAPASEK (93 aa)). The helical transmembrane segment at 123-143 (GVLWLSVVSEVLYILLLVVGF) threads the bilayer. Residues 144–163 (SLMCLELVHSSSVIDGLKLN) are Cytoplasmic-facing. The chain crosses the membrane as a helical span at residues 164–184 (AFAAVFTVLSGLLGMVAHMMY). Residues 185-207 (TQVFQVTVSLGPEDWRPHSWDYG) are Extracellular-facing. The chain crosses the membrane as a helical span at residues 208–228 (WSFCLAWGSFTCCMAASVTTL). Residues 229 to 322 (NSYTKTVIEF…RQCWVLGHWV (94 aa)) are Cytoplasmic-facing. Residue S274 is modified to Phosphoserine.

Belongs to the GSG1 family. As to quaternary structure, component of the inner core of AMPAR complexes. AMPAR complexes consist of an inner core made of 4 pore-forming GluA/GRIA proteins (GRIA1, GRIA2, GRIA3 and GRIA4) and 4 major auxiliary subunits arranged in a twofold symmetry. One of the two pairs of distinct binding sites is occupied either by CNIH2, CNIH3 or CACNG2, CACNG3. The other harbors CACNG2, CACNG3, CACNG4, CACNG8 or GSG1L. This inner core of AMPAR complexes is complemented by outer core constituents binding directly to the GluA/GRIA proteins at sites distinct from the interaction sites of the inner core constituents. Outer core constituents include at least PRRT1, PRRT2, CKAMP44/SHISA9, FRRS1L and NRN1. The proteins of the inner and outer core serve as a platform for other, more peripherally associated AMPAR constituents. Alone or in combination, these auxiliary subunits control the gating and pharmacology of the AMPAR complexes and profoundly impact their biogenesis and protein processing. Expressed in the brain, including hippocampus (at protein level).

It is found in the cell membrane. The protein resides in the synapse. As a component of the inner core of AMPAR complexes, modifies AMPA receptor (AMPAR) gating. In Mus musculus (Mouse), this protein is Germ cell-specific gene 1-like protein (Gsg1l).